Consider the following 207-residue polypeptide: LexA repressor (207 aa).

The H-T-H motif DNA-binding region spans 28-48 (RAEIASRLGFKSANAAEEHLK). Active-site for autocatalytic cleavage activity residues include Ser-124 and Lys-161.

This sequence belongs to the peptidase S24 family. In terms of assembly, homodimer.

It catalyses the reaction Hydrolysis of Ala-|-Gly bond in repressor LexA.. Its function is as follows. Represses a number of genes involved in the response to DNA damage (SOS response), including recA and lexA. In the presence of single-stranded DNA, RecA interacts with LexA causing an autocatalytic cleavage which disrupts the DNA-binding part of LexA, leading to derepression of the SOS regulon and eventually DNA repair. This Shewanella amazonensis (strain ATCC BAA-1098 / SB2B) protein is LexA repressor.